We begin with the raw amino-acid sequence, 1070 residues long: DNA-directed RNA polymerase subunit beta (1070 aa).

Belongs to the RNA polymerase beta chain family. As to quaternary structure, in plastids the minimal PEP RNA polymerase catalytic core is composed of four subunits: alpha, beta, beta', and beta''. When a (nuclear-encoded) sigma factor is associated with the core the holoenzyme is formed, which can initiate transcription.

It is found in the plastid. Its subcellular location is the chloroplast. The enzyme catalyses RNA(n) + a ribonucleoside 5'-triphosphate = RNA(n+1) + diphosphate. DNA-dependent RNA polymerase catalyzes the transcription of DNA into RNA using the four ribonucleoside triphosphates as substrates. The chain is DNA-directed RNA polymerase subunit beta from Illicium oligandrum (Star anise).